The following is a 172-amino-acid chain: Large ribosomal subunit protein uL10 (172 aa).

This sequence belongs to the universal ribosomal protein uL10 family. In terms of assembly, part of the ribosomal stalk of the 50S ribosomal subunit. The N-terminus interacts with L11 and the large rRNA to form the base of the stalk. The C-terminus forms an elongated spine to which L12 dimers bind in a sequential fashion forming a multimeric L10(L12)X complex.

Forms part of the ribosomal stalk, playing a central role in the interaction of the ribosome with GTP-bound translation factors. The protein is Large ribosomal subunit protein uL10 of Prosthecochloris aestuarii (strain DSM 271 / SK 413).